A 201-amino-acid chain; its full sequence is MAERRIPFTLQRTPSWDVPDLHQTSRIFDQAFGLPPVFEDFSGFPTTHWPGYMRPSLMTPDIMIPQSPMMYHPGHMMAHQARALSRQMSSGMSEIKQTQDNWKISLDVPHFSPEELVVKTKDGVLEISGKHEERKDEHGFVSRSFTRKYTLPPTANIEKVTSSLSPEGVLTVEAPINKPALEYSETTIPVNVESSGAVAKK.

Ser15 is modified (phosphoserine; by PKA and PKC). In terms of domain architecture, sHSP spans 83–193 (ALSRQMSSGM…SETTIPVNVE (111 aa)).

The protein belongs to the small heat shock protein (HSP20) family. In terms of assembly, homooligomer. Homodimer; becomes monomeric upon activation. Heterooligomer.

The protein localises to the cytoplasm. The protein resides in the nucleus. It is found in the cytoskeleton. It localises to the spindle. Small heat shock protein which functions as a molecular chaperone probably maintaining denatured proteins in a folding-competent state. Plays a role in stress resistance and actin organization. The chain is Heat shock protein beta-1 (hspb1) from Poeciliopsis lucida (Desert topminnow).